Consider the following 72-residue polypeptide: Exodeoxyribonuclease 7 small subunit (72 aa).

The protein belongs to the XseB family. In terms of assembly, heterooligomer composed of large and small subunits.

It is found in the cytoplasm. The catalysed reaction is Exonucleolytic cleavage in either 5'- to 3'- or 3'- to 5'-direction to yield nucleoside 5'-phosphates.. Functionally, bidirectionally degrades single-stranded DNA into large acid-insoluble oligonucleotides, which are then degraded further into small acid-soluble oligonucleotides. The chain is Exodeoxyribonuclease 7 small subunit from Clostridium kluyveri (strain NBRC 12016).